The sequence spans 478 residues: Phosphatidylinositol 4-kinase type 2-alpha (478 aa).

Position 1 is an N-acetylmethionine (M1). Residues 1–57 are disordered; the sequence is MDETSPLVSPERAQPPEYTFPSVSGAHFPQVPGGAVRVAAAGSGPSPPCSPGHDRER. Residues S5, S9, S43, S46, and S50 each carry the phosphoserine modification. A compositionally biased stretch (low complexity) spans 31–44; sequence VPGGAVRVAAAGSG. The 330-residue stretch at 123–452 folds into the PI3K/PI4K catalytic domain; the sequence is SIYPERIYQG…VQMPPVIVET (330 aa). Residues 129 to 135 are G-loop; it reads IYQGSSG. ATP contacts are provided by residues 130-136 and K151; that span reads YQGSSGS. An important for substrate binding region spans residues 156-158; the sequence is EPY. The tract at residues 164 to 177 is important for interaction with membranes; the sequence is KWTKWLQKLCCPCC. S-palmitoyl cysteine attachment occurs at residues C173, C174, C176, and C177. An ATP-binding site is contributed by 260 to 263; sequence QLFV. The tract at residues 267–275 is important for interaction with membranes; sequence KDADYWLRR. The interval 304-312 is catalytic loop; it reads RNTDRGNDN. The activation loop stretch occupies residues 343–363; the sequence is AIDNGLAFPLKHPDSWRAYPF. D345 contacts ATP. Residues 358–367 form an important for interaction with membranes region; sequence WRAYPFYWAW. Phosphoserine is present on S461.

This sequence belongs to the PI3/PI4-kinase family. Type II PI4K subfamily. As to quaternary structure, associates with the BLOC-1 and the AP-3 complexes; the BLOC-1 complex is required for optimal binding of PI4K2A to the AP-3 complex. Interacts with BLOC1S5 and DTNBP1. Interacts with FOS; this interaction may enhance phosphatidylinositol phosphorylation activity. Interacts with ITCH. Interacts with ATG9A. Post-translationally, ubiquitinated by ITCH; this does not lead to proteasomal degradation. Palmitoylated. Palmitoylated by ZDHHC3 and ZDHHC7 in the CCPCC motif. Palmitoylation is cholesterol-dependent, and required for TGN localization. In terms of tissue distribution, detected in adult brain, especially in neurons in the cerebellum, brain cortex, dorsal root ganglion and spinal cord (at protein level).

Its subcellular location is the golgi apparatus. The protein localises to the trans-Golgi network membrane. It is found in the membrane raft. It localises to the endosome. The protein resides in the endosome membrane. Its subcellular location is the cytoplasmic vesicle. The protein localises to the cell projection. It is found in the dendrite. It localises to the presynaptic cell membrane. The protein resides in the synapse. Its subcellular location is the synaptosome. The protein localises to the mitochondrion. It is found in the membrane. It localises to the cell membrane. The protein resides in the perikaryon. Its subcellular location is the neuron projection. The catalysed reaction is a 1,2-diacyl-sn-glycero-3-phospho-(1D-myo-inositol) + ATP = a 1,2-diacyl-sn-glycero-3-phospho-(1D-myo-inositol 4-phosphate) + ADP + H(+). Functionally, membrane-bound phosphatidylinositol-4 kinase (PI4-kinase) that catalyzes the phosphorylation of phosphatidylinositol (PI) to phosphatidylinositol 4-phosphate (PI4P), a lipid that plays important roles in endocytosis, Golgi function, protein sorting and membrane trafficking and is required for prolonged survival of neurons. Besides, phosphorylation of phosphatidylinositol (PI) to phosphatidylinositol 4-phosphate (PI4P) is the first committed step in the generation of phosphatidylinositol 4,5-bisphosphate (PIP2), a precursor of the second messenger inositol 1,4,5-trisphosphate (InsP3). This chain is Phosphatidylinositol 4-kinase type 2-alpha (Pi4k2a), found in Rattus norvegicus (Rat).